Consider the following 298-residue polypeptide: ADP-ribosylation factor GTPase-activating protein effector protein 2 (298 aa).

Residue Ser-2 is modified to N-acetylserine. The region spanning 8-130 is the Arf-GAP domain; the sequence is KKALSALLRD…KWIGDLSSIE (123 aa). A C4-type zinc finger spans residues 23-47; it reads CADCKAQLHPRWASWSLGVFICIKC. Residues 137 to 180 are disordered; the sequence is EPVLHKPSANHSLPASNARLDQSSNSLQKTQTQPPSHLLSTSRS. The span at 145-171 shows a compositional bias: polar residues; the sequence is ANHSLPASNARLDQSSNSLQKTQTQPP. Residues Ser-180, Ser-183, and Ser-207 each carry the phosphoserine modification.

It is found in the cytoplasm. It localises to the golgi apparatus. GTPase-activating protein for the ADP ribosylation factor family. This is ADP-ribosylation factor GTPase-activating protein effector protein 2 (AGE2) from Saccharomyces cerevisiae (strain ATCC 204508 / S288c) (Baker's yeast).